We begin with the raw amino-acid sequence, 1174 residues long: Tyrosine-protein phosphatase non-receptor type 21 (1174 aa).

The FERM domain maps to 23–308; that stretch reads LVARIQLLNN…ARHKFYRLNQ (286 aa). Positions 396–423 are enriched in polar residues; that stretch reads SAHSTNSLNNPQPYLQPSPMSSNPSITG. The disordered stretch occupies residues 396 to 445; that stretch reads SAHSTNSLNNPQPYLQPSPMSSNPSITGSDVMRPDYLPSHRHSAVIPPSY. Residues Ser577, Ser589, Ser590, Ser637, and Ser673 each carry the phosphoserine modification. Residues 673–692 are disordered; the sequence is SQPSVFTERTQREGPEEAEG. The span at 681–692 shows a compositional bias: basic and acidic residues; that stretch reads RTQREGPEEAEG. Phosphoserine occurs at positions 710 and 711. Disordered stretches follow at residues 711 to 745 and 769 to 806; these read SEEE…DPPG and KRMM…TSGR. Positions 712–722 are enriched in acidic residues; sequence EEEEDEDFEEE. The span at 796–805 shows a compositional bias: polar residues; the sequence is MSESDLTTSG. 3 positions are modified to phosphoserine: Ser797, Ser799, and Ser804. Positions 896 to 1167 constitute a Tyrosine-protein phosphatase domain; it reads VFTEYERILK…TFVYRVLIQF (272 aa). Substrate is bound by residues Glu1067, 1108–1114, and Gln1152; that span reads CSAGVGR. The active-site Phosphocysteine intermediate is Cys1108.

The protein belongs to the protein-tyrosine phosphatase family. Non-receptor class subfamily.

The protein resides in the cytoplasm. Its subcellular location is the cytoskeleton. The catalysed reaction is O-phospho-L-tyrosyl-[protein] + H2O = L-tyrosyl-[protein] + phosphate. This Homo sapiens (Human) protein is Tyrosine-protein phosphatase non-receptor type 21 (PTPN21).